The sequence spans 470 residues: Argininosuccinate synthase (470 aa).

ATP is bound by residues alanine 17 to serine 25 and alanine 43. Residue tyrosine 99 coordinates L-citrulline. The ATP site is built by glycine 129 and threonine 131. Residues threonine 131, asparagine 135, and aspartate 136 each contribute to the L-aspartate site. Residue asparagine 135 coordinates L-citrulline. ATP is bound at residue aspartate 136. Positions 139 and 192 each coordinate L-citrulline. An ATP-binding site is contributed by aspartate 194. Residues threonine 201, glutamate 203, and glutamate 280 each coordinate L-citrulline. The segment at isoleucine 448 to aspartate 470 is disordered.

Belongs to the argininosuccinate synthase family. Type 2 subfamily. Homotetramer.

It is found in the cytoplasm. It catalyses the reaction L-citrulline + L-aspartate + ATP = 2-(N(omega)-L-arginino)succinate + AMP + diphosphate + H(+). The protein operates within amino-acid biosynthesis; L-arginine biosynthesis; L-arginine from L-ornithine and carbamoyl phosphate: step 2/3. This chain is Argininosuccinate synthase, found in Kineococcus radiotolerans (strain ATCC BAA-149 / DSM 14245 / SRS30216).